Consider the following 541-residue polypeptide: MNAIVEQLKSTAAATKATDLRAAFAADAQRFSRFSVALDDLLMDFSKTAVNDDILKLLVKLAEDGGVEKKREEMFSGKAINFTEDRAVLHTALRNRSNTPVLVDGKDVMPDVNAVLAAMGKFADEIRSGALKGATGKAITDVINIGIGGSDLGPVMATLALAPFHDGPRAHFVSNIDGAHIADILKLVQPETTLFIVASKTFTTVETMTNAQTARNFIAKALGEAAVQHHFAAVSTALDKVAAFGIDSARVFGFWDWVGGRYSIWSAIGLPLMIAIGPENFGKFLDGAHAVDNHFRKAPITENLPMLLGLIGFYHRNVLGYPTRAILPYDQRLSRFPAYLQQLDMESNGKGVTIDGTPVEGNSGPVVWGEPGTNGQHAFYQLIHQGTSIIPAEFMIAANAFEPELRHQHQLLISNVLAQSEALMKGRTFAEAKKQLTDKGMDDKKADFIAPHRVFTGNRPSITFVYDKLTPYALGRLIALYEHRVFVEGVLFRINSFDQWGVELGKELATGLLPVVEGKESAEGHDSSTQGLVAALAKLAK.

The Proton donor role is filled by Glu346. Residues His377 and Lys506 contribute to the active site.

Belongs to the GPI family.

It is found in the cytoplasm. It carries out the reaction alpha-D-glucose 6-phosphate = beta-D-fructose 6-phosphate. It functions in the pathway carbohydrate biosynthesis; gluconeogenesis. The protein operates within carbohydrate degradation; glycolysis; D-glyceraldehyde 3-phosphate and glycerone phosphate from D-glucose: step 2/4. In terms of biological role, catalyzes the reversible isomerization of glucose-6-phosphate to fructose-6-phosphate. This is Glucose-6-phosphate isomerase from Rhizobium etli (strain CIAT 652).